The following is a 419-amino-acid chain: MVTLVLGAQFGDEGKGKITDLLSQTADLCCRSAGGHNAGHTIIHDNITYDFHILPSGLISPKCVNLIGSGTVVHVPSFFKELKALEEKGLKDANKRVFISDRAHVCFDLHSVVDGLEEASLGGRKVGTTGKGIGPCYSDKASRTGVRIGEVLDEGIVERKLRNLEAGYRRRFGDLTYDLEEEIKRFKEYRTLLKPFVVDQFTLLRKYKDASILIEGANALMLDIDHGTYPYVTSSCTGLGGTIQSLCLNPTEIKSIVGVVKAYSTRVGSGPFPSEQINEIGEKLQVTGREFGVTTGRKRRCGWLDLVMCRYSTLINHYTALNLTKLDILDDFDEIKVAVAYRLNGKEVESFPADAEELEKVEVVYETLPGWKVNTMGATKWEDLPPNAQKYIEYIEKDLGVPVRWIGTGPARSHMIERL.

Residues 11–17 (GDEGKGK) and 39–41 (GHT) contribute to the GTP site. Catalysis depends on aspartate 12, which acts as the Proton acceptor. The Mg(2+) site is built by aspartate 12 and glycine 39. Residues 12–15 (DEGK), 37–40 (NAGH), threonine 129, arginine 143, asparagine 218, threonine 233, and arginine 297 contribute to the IMP site. Histidine 40 serves as the catalytic Proton donor. 293-299 (VTTGRKR) contributes to the substrate binding site. Residues arginine 299, 325–327 (KLD), and 407–409 (GTG) contribute to the GTP site.

It belongs to the adenylosuccinate synthetase family. As to quaternary structure, homodimer. The cofactor is Mg(2+).

It is found in the cytoplasm. The catalysed reaction is IMP + L-aspartate + GTP = N(6)-(1,2-dicarboxyethyl)-AMP + GDP + phosphate + 2 H(+). It functions in the pathway purine metabolism; AMP biosynthesis via de novo pathway; AMP from IMP: step 1/2. Functionally, plays an important role in the de novo pathway and in the salvage pathway of purine nucleotide biosynthesis. Catalyzes the first committed step in the biosynthesis of AMP from IMP. This chain is Adenylosuccinate synthetase, found in Coccidioides posadasii (strain C735) (Valley fever fungus).